Consider the following 353-residue polypeptide: Phospho-furanose lactonase (353 aa).

5 residues coordinate Zn(2+): His-24, His-26, Lys-153, His-186, and His-214. Lys-153 bears the N6-carboxylysine mark. Position 244–245 (244–245) interacts with substrate; the sequence is KY. Zn(2+) is bound at residue Asp-272. 275 to 278 lines the substrate pocket; that stretch reads RILY.

It belongs to the metallo-dependent hydrolases superfamily. Phosphotriesterase family. It depends on Zn(2+) as a cofactor.

The catalysed reaction is a 1,4-lactone + H2O = a 4-hydroxyacid + H(+). The enzyme catalyses D-xylono-1,4-lactone 5-phosphate + H2O = 5-phospho-D-xylonate + H(+). It catalyses the reaction L-arabino-1,4-lactone 5-phosphate + H2O = 5-phospho-L-arabinonate + H(+). In terms of biological role, catalyzes the hydrolysis of D-xylono-1,4-lactone-5-phosphate and L-arabino-1,4-lactone-5-phosphate. Also able to hydrolyze carboxy 1,4-lactones. The polypeptide is Phospho-furanose lactonase (Mycoplasmopsis synoviae (strain 53) (Mycoplasma synoviae)).